A 491-amino-acid polypeptide reads, in one-letter code: Ketol-acid reductoisomerase (NADP(+)) (491 aa).

The KARI N-terminal Rossmann domain maps to 15-208 (AQLGKCRFMG…GGHRAGVLES (194 aa)). NADP(+)-binding positions include 45-48 (CGAQ), R68, R76, S78, and 108-110 (DKQ). H132 is an active-site residue. Residue G158 coordinates NADP(+). 2 consecutive KARI C-terminal knotted domains span residues 209 to 344 (SFVA…TAPQ) and 345 to 484 (YEGK…MTDM). Mg(2+)-binding residues include D217, E221, E389, and E393. S414 lines the substrate pocket.

It belongs to the ketol-acid reductoisomerase family. The cofactor is Mg(2+).

It catalyses the reaction (2R)-2,3-dihydroxy-3-methylbutanoate + NADP(+) = (2S)-2-acetolactate + NADPH + H(+). The enzyme catalyses (2R,3R)-2,3-dihydroxy-3-methylpentanoate + NADP(+) = (S)-2-ethyl-2-hydroxy-3-oxobutanoate + NADPH + H(+). Its pathway is amino-acid biosynthesis; L-isoleucine biosynthesis; L-isoleucine from 2-oxobutanoate: step 2/4. It participates in amino-acid biosynthesis; L-valine biosynthesis; L-valine from pyruvate: step 2/4. Its function is as follows. Involved in the biosynthesis of branched-chain amino acids (BCAA). Catalyzes an alkyl-migration followed by a ketol-acid reduction of (S)-2-acetolactate (S2AL) to yield (R)-2,3-dihydroxy-isovalerate. In the isomerase reaction, S2AL is rearranged via a Mg-dependent methyl migration to produce 3-hydroxy-3-methyl-2-ketobutyrate (HMKB). In the reductase reaction, this 2-ketoacid undergoes a metal-dependent reduction by NADPH to yield (R)-2,3-dihydroxy-isovalerate. The polypeptide is Ketol-acid reductoisomerase (NADP(+)) (Salmonella typhimurium (strain LT2 / SGSC1412 / ATCC 700720)).